We begin with the raw amino-acid sequence, 872 residues long: Leucine-rich repeat-containing protein 66 (872 aa).

The helical transmembrane segment at 4–24 threads the bilayer; it reads FYVRVTILVTGLCFVETVTTP. Residues Asn-45 and Asn-108 are each glycosylated (N-linked (GlcNAc...) asparagine). 5 LRR repeats span residues 142-164, 165-186, 189-210, 213-234, and 239-259; these read RLQV…WKLK, SLRS…DFHG, QLES…AFKG, KLQV…VTIA, and HLEL…VNFQ. Positions 339-363 are disordered; the sequence is LRGMWPQSPVELRDSQDEQVTDRKD. The span at 349–363 shows a compositional bias: basic and acidic residues; that stretch reads ELRDSQDEQVTDRKD. Residues 371–391 form a helical membrane-spanning segment; it reads LAICLSVFITFVVAFCLGAFA. A compositionally biased stretch (polar residues) spans 467–483; that stretch reads QMLGSNGTDPGHQQSPE. 4 disordered regions span residues 467–501, 560–579, 695–761, and 776–872; these read QMLG…VLPS, GTFP…SQPR, NYES…SQRI, and LISG…SKHW. The N-linked (GlcNAc...) asparagine glycan is linked to Asn-472. Residues 484–493 are compositionally biased toward basic and acidic residues; it reads QLKDSNESRS. Position 718 is a phosphoserine (Ser-718). 3 stretches are compositionally biased toward polar residues: residues 725–736, 746–760, and 785–805; these read SVENDGTSQPLP, SVTS…TSQR, and CETN…STWP. Ser-752 is modified (phosphoserine). The segment covering 831–841 has biased composition (basic and acidic residues); the sequence is VDWHYSLRDLE.

It is found in the membrane. This is Leucine-rich repeat-containing protein 66 (Lrrc66) from Mus musculus (Mouse).